The following is a 214-amino-acid chain: GTP cyclohydrolase 1 (214 aa).

Residues Cys-108, His-111, and Cys-179 each coordinate Zn(2+).

The protein belongs to the GTP cyclohydrolase I family. Toroid-shaped homodecamer, composed of two pentamers of five dimers.

The enzyme catalyses GTP + H2O = 7,8-dihydroneopterin 3'-triphosphate + formate + H(+). It functions in the pathway cofactor biosynthesis; 7,8-dihydroneopterin triphosphate biosynthesis; 7,8-dihydroneopterin triphosphate from GTP: step 1/1. This is GTP cyclohydrolase 1 from Shewanella putrefaciens (strain CN-32 / ATCC BAA-453).